Consider the following 263-residue polypeptide: Ribosomal RNA large subunit methyltransferase E (263 aa).

Positions 1 to 34 (MSSAEGPKSGGGSKGSKSEASSRVRGSAPTGSRD) are disordered. Residues glycine 102, tryptophan 104, aspartate 126, aspartate 142, and aspartate 166 each coordinate S-adenosyl-L-methionine. Lysine 206 serves as the catalytic Proton acceptor.

The protein belongs to the class I-like SAM-binding methyltransferase superfamily. RNA methyltransferase RlmE family.

Its subcellular location is the cytoplasm. The enzyme catalyses uridine(2552) in 23S rRNA + S-adenosyl-L-methionine = 2'-O-methyluridine(2552) in 23S rRNA + S-adenosyl-L-homocysteine + H(+). Its function is as follows. Specifically methylates the uridine in position 2552 of 23S rRNA at the 2'-O position of the ribose in the fully assembled 50S ribosomal subunit. The sequence is that of Ribosomal RNA large subunit methyltransferase E from Rhodospirillum rubrum (strain ATCC 11170 / ATH 1.1.1 / DSM 467 / LMG 4362 / NCIMB 8255 / S1).